Consider the following 332-residue polypeptide: NADH-quinone oxidoreductase subunit H (332 aa).

The next 9 membrane-spanning stretches (helical) occupy residues 4–24, 44–64, 78–98, 120–140, 165–185, 194–214, 255–275, 279–299, and 312–332; these read FAFF…IFAS, IGPD…MIKL, FIFA…LAAI, VALL…FLGG, VGAL…LVDI, FSWL…ALFI, IAGA…FWII, IMMI…RAAF, and YLIL…AVLL.

This sequence belongs to the complex I subunit 1 family. NDH-1 is composed of 14 different subunits. Subunits NuoA, H, J, K, L, M, N constitute the membrane sector of the complex.

The protein localises to the cell inner membrane. The catalysed reaction is a quinone + NADH + 5 H(+)(in) = a quinol + NAD(+) + 4 H(+)(out). In terms of biological role, NDH-1 shuttles electrons from NADH, via FMN and iron-sulfur (Fe-S) centers, to quinones in the respiratory chain. The immediate electron acceptor for the enzyme in this species is believed to be ubiquinone. Couples the redox reaction to proton translocation (for every two electrons transferred, four hydrogen ions are translocated across the cytoplasmic membrane), and thus conserves the redox energy in a proton gradient. This subunit may bind ubiquinone. The protein is NADH-quinone oxidoreductase subunit H of Campylobacter jejuni subsp. jejuni serotype O:6 (strain 81116 / NCTC 11828).